The primary structure comprises 250 residues: 5-oxoprolinase subunit A (250 aa).

This sequence belongs to the LamB/PxpA family. Forms a complex composed of PxpA, PxpB and PxpC.

It carries out the reaction 5-oxo-L-proline + ATP + 2 H2O = L-glutamate + ADP + phosphate + H(+). In terms of biological role, catalyzes the cleavage of 5-oxoproline to form L-glutamate coupled to the hydrolysis of ATP to ADP and inorganic phosphate. This Staphylococcus aureus (strain bovine RF122 / ET3-1) protein is 5-oxoprolinase subunit A.